The chain runs to 620 residues: Glutathione-regulated potassium-efflux system protein KefC (620 aa).

Transmembrane regions (helical) follow at residues 4-24 (HTLL…PIAV), 26-46 (LGLG…PWGL), 54-74 (SILH…GLEL), 90-110 (GALQ…FLGL), 114-134 (VAEL…MQAM), 149-169 (FAVL…IPLL), 178-198 (LGAF…VVLL), 218-238 (VFSA…EEVG), 270-290 (GLLL…GTLV), 294-314 (LRIL…LWLV), 327-347 (WFAV…GAAQ), and 359-379 (ALTL…VLLT). The RCK N-terminal domain occupies 399-518 (QPRVIVAGFG…AGVAMPERET (120 aa)). Positions 599 to 620 (QGTAEGKHSGEAADEPEVKPSI) are disordered.

The protein belongs to the monovalent cation:proton antiporter 2 (CPA2) transporter (TC 2.A.37) family. KefC subfamily. As to quaternary structure, homodimer. Interacts with the regulatory subunit KefF.

It localises to the cell inner membrane. Pore-forming subunit of a potassium efflux system that confers protection against electrophiles. Catalyzes K(+)/H(+) antiport. The polypeptide is Glutathione-regulated potassium-efflux system protein KefC (Salmonella dublin (strain CT_02021853)).